We begin with the raw amino-acid sequence, 225 residues long: Ribose-5-phosphate isomerase A (225 aa).

Substrate contacts are provided by residues 27 to 30 (SGST), 82 to 85 (DGAD), and 95 to 98 (KGGG). Residue E104 is the Proton acceptor of the active site. K122 contacts substrate.

Belongs to the ribose 5-phosphate isomerase family. As to quaternary structure, homodimer.

It carries out the reaction aldehydo-D-ribose 5-phosphate = D-ribulose 5-phosphate. The protein operates within carbohydrate degradation; pentose phosphate pathway; D-ribose 5-phosphate from D-ribulose 5-phosphate (non-oxidative stage): step 1/1. Catalyzes the reversible conversion of ribose-5-phosphate to ribulose 5-phosphate. This chain is Ribose-5-phosphate isomerase A, found in Archaeoglobus fulgidus (strain ATCC 49558 / DSM 4304 / JCM 9628 / NBRC 100126 / VC-16).